The chain runs to 82 residues: Small ribosomal subunit protein bS16 (82 aa).

Belongs to the bacterial ribosomal protein bS16 family.

The chain is Small ribosomal subunit protein bS16 from Desulfosudis oleivorans (strain DSM 6200 / JCM 39069 / Hxd3) (Desulfococcus oleovorans).